Here is a 348-residue protein sequence, read N- to C-terminus: Phosphate acyltransferase (348 aa).

Belongs to the PlsX family. In terms of assembly, homodimer. Probably interacts with PlsY.

The protein localises to the cytoplasm. The enzyme catalyses a fatty acyl-[ACP] + phosphate = an acyl phosphate + holo-[ACP]. Its pathway is lipid metabolism; phospholipid metabolism. Its function is as follows. Catalyzes the reversible formation of acyl-phosphate (acyl-PO(4)) from acyl-[acyl-carrier-protein] (acyl-ACP). This enzyme utilizes acyl-ACP as fatty acyl donor, but not acyl-CoA. The protein is Phosphate acyltransferase of Pectobacterium atrosepticum (strain SCRI 1043 / ATCC BAA-672) (Erwinia carotovora subsp. atroseptica).